Here is a 47-residue protein sequence, read N- to C-terminus: Protein PsbN (47 aa).

The chain crosses the membrane as a helical span at residues 9 to 31 (YSLLIAMVTITFGLTGYGLYTAF).

It belongs to the PsbN family.

It is found in the cellular thylakoid membrane. Functionally, may play a role in photosystem I and II biogenesis. This chain is Protein PsbN, found in Prochlorococcus marinus (strain MIT 9303).